Consider the following 520-residue polypeptide: ATP-dependent RNA helicase CshA (520 aa).

Positions 2-30 (TKFSEFGLDEKIVKSVNRMGFEEATPIQE) match the Q motif motif. In terms of domain architecture, Helicase ATP-binding spans 33–203 (IPLGLEGKDL…ERFMHSPELI (171 aa)). 46–53 (AQTGTGKT) serves as a coordination point for ATP. A DEAD box motif is present at residues 151 to 154 (DEAD). Residues 214–374 (LIEQFFVKVH…PLQAPTWDEA (161 aa)) form the Helicase C-terminal domain. A compositionally biased stretch (basic and acidic residues) spans 428 to 439 (KTPVHITEERPL). The interval 428 to 520 (KTPVHITEER…NKGNYSQKSK (93 aa)) is disordered. Gly residues-rich tracts occupy residues 442–468 (RGGG…GKGG) and 482–496 (SGGG…GGGG).

The protein belongs to the DEAD box helicase family. CshA subfamily. As to quaternary structure, oligomerizes, may be a member of the RNA degradosome.

It is found in the cytoplasm. The catalysed reaction is ATP + H2O = ADP + phosphate + H(+). In terms of biological role, DEAD-box RNA helicase possibly involved in RNA degradation. Unwinds dsRNA in both 5'- and 3'-directions, has RNA-dependent ATPase activity. Involved in cold tolerance, motility and alcohol tolerance. This is ATP-dependent RNA helicase CshA from Listeria monocytogenes serovar 1/2a (strain ATCC BAA-679 / EGD-e).